The following is a 164-amino-acid chain: MIRVGQGFDAHRFGEPGTPLILGGVQVPHERGLAAHSDGDVLMHAVTDGLLGAAGEGDLGTHFPDSDDAYKGIDSRILLRDALQRVRAGGWRVVNVDATLIAQAPRMNPHVGAMRDHLAADLEVAPSAVNVKATTTERMGFPGRGEGIAAMAVVLIARDGFFEH.

2 residues coordinate a divalent metal cation: Asp-9 and His-11. Residues 9–11 and 36–37 each bind 4-CDP-2-C-methyl-D-erythritol 2-phosphate; these read DAH and HS. His-44 contributes to the a divalent metal cation binding site. 4-CDP-2-C-methyl-D-erythritol 2-phosphate is bound by residues 58–60, 63–67, 134–137, Phe-141, and Arg-144; these read DLG, FPDSD, and TTTE.

This sequence belongs to the IspF family. Homotrimer. It depends on a divalent metal cation as a cofactor.

The enzyme catalyses 4-CDP-2-C-methyl-D-erythritol 2-phosphate = 2-C-methyl-D-erythritol 2,4-cyclic diphosphate + CMP. It participates in isoprenoid biosynthesis; isopentenyl diphosphate biosynthesis via DXP pathway; isopentenyl diphosphate from 1-deoxy-D-xylulose 5-phosphate: step 4/6. Functionally, involved in the biosynthesis of isopentenyl diphosphate (IPP) and dimethylallyl diphosphate (DMAPP), two major building blocks of isoprenoid compounds. Catalyzes the conversion of 4-diphosphocytidyl-2-C-methyl-D-erythritol 2-phosphate (CDP-ME2P) to 2-C-methyl-D-erythritol 2,4-cyclodiphosphate (ME-CPP) with a corresponding release of cytidine 5-monophosphate (CMP). The chain is 2-C-methyl-D-erythritol 2,4-cyclodiphosphate synthase from Alkalilimnicola ehrlichii (strain ATCC BAA-1101 / DSM 17681 / MLHE-1).